The primary structure comprises 88 residues: Small ribosomal subunit protein bS20 (88 aa).

The tract at residues 1–20 (MANHKSAEKRARQTIKRTER) is disordered.

It belongs to the bacterial ribosomal protein bS20 family.

In terms of biological role, binds directly to 16S ribosomal RNA. In Campylobacter fetus subsp. fetus (strain 82-40), this protein is Small ribosomal subunit protein bS20.